The chain runs to 645 residues: Alkyldihydroxyacetonephosphate synthase, peroxisomal (645 aa).

Positions 1 to 10 (MAEAAAGEAG) are enriched in low complexity. The N-terminal 45 residues, 1–45 (MAEAAAGEAGASERDPDAGRARRRLRVLSGHLLGRPQEAPSTNEC), are a transit peptide targeting the peroxisome. Residues 1–72 (MAEAAAGEAG…AAPESGTIPK (72 aa)) are disordered. Positions 11–20 (ASERDPDAGR) are enriched in basic and acidic residues. Positions 50-69 (AASAAGASPAATPAAPESGT) are enriched in low complexity. Residues Ser52 and Ser57 each carry the phosphoserine modification. Thr61 is modified (phosphothreonine). Position 89 is an N6-acetyllysine (Lys89). One can recognise an FAD-binding PCMH-type domain in the interval 189–371 (FERIPDIVVW…TEATIKIRPT (183 aa)). FAD is bound by residues 221-227 (PIGGGTS), 290-296 (DSLEFST), and 303-306 (TRAS). Lys334 bears the N6-acetyllysine mark. 355 to 361 (EGTLGVI) lines the FAD pocket. Residue Arg502 participates in substrate binding. The Proton donor/acceptor role is filled by Tyr565. 2 important for enzyme activity regions span residues 602-604 (HHH) and 641-645 (NRNLL).

Belongs to the FAD-binding oxidoreductase/transferase type 4 family. As to quaternary structure, homodimer. FAD serves as cofactor.

The protein resides in the peroxisome membrane. It localises to the peroxisome. The enzyme catalyses a long chain fatty alcohol + a 1-acylglycerone 3-phosphate = a 1-O-alkylglycerone 3-phosphate + a long-chain fatty acid + H(+). It carries out the reaction hexadecan-1-ol + 1-hexadecanoylglycerone 3-phosphate = 1-O-hexadecylglycerone 3-phosphate + hexadecanoate + H(+). The catalysed reaction is 1-hexadecanoylglycerone 3-phosphate + a long-chain fatty acid = a 1-acylglycerone 3-phosphate + hexadecanoate. It participates in glycerolipid metabolism; ether lipid biosynthesis. In terms of biological role, catalyzes the exchange of the acyl chain in acyl-dihydroxyacetonephosphate (acyl-DHAP) for a long chain fatty alcohol, yielding the first ether linked intermediate, i.e. alkyl-dihydroxyacetonephosphate (alkyl-DHAP), in the pathway of ether lipid biosynthesis. This chain is Alkyldihydroxyacetonephosphate synthase, peroxisomal (Agps), found in Mus musculus (Mouse).